The following is a 155-amino-acid chain: Endoribonuclease YbeY (155 aa).

H114, H118, and H124 together coordinate Zn(2+).

It belongs to the endoribonuclease YbeY family. It depends on Zn(2+) as a cofactor.

The protein resides in the cytoplasm. Its function is as follows. Single strand-specific metallo-endoribonuclease involved in late-stage 70S ribosome quality control and in maturation of the 3' terminus of the 16S rRNA. In Escherichia coli O7:K1 (strain IAI39 / ExPEC), this protein is Endoribonuclease YbeY.